The sequence spans 164 residues: MEWILPIAGIIAAVAFLILVIGIVVVLLSVKKNLDHVAKTLDGVEGQVQGITRESTDLLHKANRLTEDIQDKSDRLNSVVDAVKGIGDSVQTLNGSVDRVTNSITHNISQNEDKISQVVQWSNVAMEVADKWQNRRNRRDSANYKTSSVANETNHSYTTRVDNK.

The chain crosses the membrane as a helical span at residues 7 to 27 (IAGIIAAVAFLILVIGIVVVL). A disordered region spans residues 136–164 (RNRRDSANYKTSSVANETNHSYTTRVDNK). Polar residues predominate over residues 143-164 (NYKTSSVANETNHSYTTRVDNK).

This sequence belongs to the UPF0478 family.

The protein localises to the cell membrane. This chain is UPF0478 protein SSP1024, found in Staphylococcus saprophyticus subsp. saprophyticus (strain ATCC 15305 / DSM 20229 / NCIMB 8711 / NCTC 7292 / S-41).